The chain runs to 199 residues: N-(5'-phosphoribosyl)anthranilate isomerase (199 aa).

The protein belongs to the TrpF family.

The enzyme catalyses N-(5-phospho-beta-D-ribosyl)anthranilate = 1-(2-carboxyphenylamino)-1-deoxy-D-ribulose 5-phosphate. It functions in the pathway amino-acid biosynthesis; L-tryptophan biosynthesis; L-tryptophan from chorismate: step 3/5. The protein is N-(5'-phosphoribosyl)anthranilate isomerase of Lacticaseibacillus paracasei (strain ATCC 334 / BCRC 17002 / CCUG 31169 / CIP 107868 / KCTC 3260 / NRRL B-441) (Lactobacillus paracasei).